We begin with the raw amino-acid sequence, 561 residues long: uncharacterized protein (561 aa).

The next 6 membrane-spanning stretches (helical) occupy residues 27–49 (ILEF…GLLI), 54–71 (FFGI…ALAL), 83–105 (LVYQ…SEFF), 115–137 (LTLF…IKLF), 142–162 (IIGA…AAMV), and 177–199 (VVGY…AIGA). An RCK C-terminal domain is found at 292–373 (QQDVPIEDTD…MSEVRRFLGD (82 aa)). 4 consecutive transmembrane segments (helical) span residues 383 to 405 (LMPF…PLPG), 409 to 428 (LSLG…GALN), 441 to 463 (ASRT…SAGV), and 478 to 500 (IAGG…MPLF).

The protein belongs to the AAE transporter (TC 2.A.81) family.

The protein localises to the cell membrane. This is an uncharacterized protein from Corynebacterium diphtheriae (strain ATCC 700971 / NCTC 13129 / Biotype gravis).